Reading from the N-terminus, the 603-residue chain is Chaperone protein DnaK (603 aa).

At threonine 175 the chain carries Phosphothreonine; by autocatalysis. The span at 573-586 (AQQAQQQNPDNQNN) shows a compositional bias: low complexity. Residues 573-603 (AQQAQQQNPDNQNNNKDDVTEATVTDDSTKK) are disordered. The segment covering 594 to 603 (ATVTDDSTKK) has biased composition (polar residues).

It belongs to the heat shock protein 70 family.

Functionally, acts as a chaperone. This is Chaperone protein DnaK from Ureaplasma parvum serovar 3 (strain ATCC 27815 / 27 / NCTC 11736).